We begin with the raw amino-acid sequence, 603 residues long: Matrix metalloproteinase-17 (603 aa).

A signal peptide spans Met-1 to Gly-35. Positions Gly-36 to Arg-125 are excised as a propeptide. Residues Pro-108–Leu-115 carry the Cysteine switch motif. Residue Cys-110 coordinates Zn(2+). An N-linked (GlcNAc...) asparagine glycan is attached at Asn-137. His-248 lines the Zn(2+) pocket. Residue Glu-249 is part of the active site. Zn(2+)-binding residues include His-252 and His-258. Residues Ser-301–Pro-329 form a disordered region. N-linked (GlcNAc...) asparagine glycosylation is present at Asn-318. A disulfide bridge links Cys-332 with Cys-523. Hemopexin repeat units follow at residues Ser-333–Leu-378, Leu-382–Pro-427, Pro-428–Val-475, and Pro-476–Cys-523. A disordered region spans residues Asp-537–Pro-571. Ser-565 carries GPI-anchor amidated serine lipidation. The propeptide at Gly-566–Leu-603 is removed in mature form.

The protein belongs to the peptidase M10A family. Requires Zn(2+) as cofactor. Ca(2+) serves as cofactor. In terms of processing, the precursor is cleaved by a furin endopeptidase. Expressed in brain, leukocytes, colon, ovary testis and breast cancer. Expressed also in many transformed and non-transformed cell types.

It is found in the cell membrane. It localises to the secreted. Its subcellular location is the extracellular space. The protein localises to the extracellular matrix. Functionally, endopeptidase that degrades various components of the extracellular matrix, such as fibrin. May be involved in the activation of membrane-bound precursors of growth factors or inflammatory mediators, such as tumor necrosis factor-alpha. May also be involved in tumoral process. Cleaves pro-TNF-alpha at the '74-Ala-|-Gln-75' site. Not obvious if able to proteolytically activate progelatinase A. Does not hydrolyze collagen types I, II, III, IV and V, gelatin, fibronectin, laminin, decorin nor alpha1-antitrypsin. The protein is Matrix metalloproteinase-17 (MMP17) of Homo sapiens (Human).